A 2472-amino-acid chain; its full sequence is Telomere-associated protein RIF1 (2472 aa).

Positions Met1 to Gly25 are disordered. Residue Ser402 is modified to Phosphoserine. At Thr409 the chain carries Phosphothreonine. A phosphoserine mark is found at Ser782, Ser979, and Ser1008. Thr1047 carries the post-translational modification Phosphothreonine. Positions Leu1145–Glu1192 are disordered. Residues Ser1148–Asn1169 are compositionally biased toward polar residues. Ser1162 is modified (phosphoserine). Thr1220 is subject to Phosphothreonine. Residues Ser1236 and Ser1238 each carry the phosphoserine modification. 2 stretches are compositionally biased toward basic and acidic residues: residues Ala1265–Lys1279 and Met1306–Glu1315. Disordered regions lie at residues Ala1265 to Val1318, Met1398 to Pro1464, and Ile1479 to Glu1587. Residues Asn1400 to Lys1412 are compositionally biased toward polar residues. Phosphoserine occurs at positions 1422, 1454, and 1513. 2 stretches are compositionally biased toward basic and acidic residues: residues Ser1431–Pro1464 and Glu1500–Val1530. Phosphothreonine is present on Thr1518. A phosphoserine mark is found at Ser1542, Ser1552, Ser1554, Ser1556, and Ser1564. Over residues Arg1565–Asn1574 the composition is skewed to basic residues. Residues Ser1576, Ser1579, Ser1613, Ser1616, Ser1688, Ser1693, Ser1706, and Ser1709 each carry the phosphoserine modification. The disordered stretch occupies residues Thr1762 to Tyr1782. Residues Val1771 to Tyr1782 are compositionally biased toward polar residues. Thr1806 is modified (phosphothreonine). At Ser1810 the chain carries Phosphoserine. The span at Ala1846–Phe1859 shows a compositional bias: polar residues. Residues Ala1846–Lys1889 form a disordered region. Phosphoserine is present on residues Ser1873 and Ser1876. The segment covering Leu1877 to Lys1889 has biased composition (basic and acidic residues). The interaction with condensed chromosomes in telophase stretch occupies residues Glu1924–Ile2472. Phosphoserine occurs at positions 1926 and 1971. The tract at residues Glu1992–Asn2021 is disordered. Residues Ser2006–Asn2021 show a composition bias toward basic and acidic residues. Ser2144 and Ser2161 each carry phosphoserine. Position 2167 is a phosphothreonine (Thr2167). Residues Val2170–Glu2446 form an interaction with ERCC6 region. A phosphoserine mark is found at Ser2172, Ser2176, Ser2195, Ser2196, and Ser2205. Positions Arg2227 to Ala2255 are enriched in polar residues. The disordered stretch occupies residues Arg2227–Lys2269. 6 positions are modified to phosphoserine: Ser2260, Ser2339, Ser2391, Ser2393, Ser2465, and Ser2471.

Belongs to the RIF1 family. Interacts with TP53BP1 (when phosphorylated by ATM). May interact with TRF2. Interacts with SHLD2. Interacts with ERCC6 (via WHD region). Interacts with ASTE1. In terms of tissue distribution, highly expressed in testis.

Its subcellular location is the nucleus. It is found in the chromosome. It localises to the telomere. The protein resides in the cytoplasm. The protein localises to the cytoskeleton. Its subcellular location is the spindle. In terms of biological role, key regulator of TP53BP1 that plays a key role in the repair of double-strand DNA breaks (DSBs) in response to DNA damage: acts by promoting non-homologous end joining (NHEJ)-mediated repair of DSBs. In response to DNA damage, interacts with ATM-phosphorylated TP53BP1. Interaction with TP53BP1 leads to dissociate the interaction between NUDT16L1/TIRR and TP53BP1, thereby unmasking the tandem Tudor-like domain of TP53BP1 and allowing recruitment to DNA DSBs. Once recruited to DSBs, RIF1 and TP53BP1 act by promoting NHEJ-mediated repair of DSBs. In the same time, RIF1 and TP53BP1 specifically counteract the function of BRCA1 by blocking DSBs resection via homologous recombination (HR) during G1 phase. Also required for immunoglobulin class-switch recombination (CSR) during antibody genesis, a process that involves the generation of DNA DSBs. Promotes NHEJ of dysfunctional telomeres. The protein is Telomere-associated protein RIF1 of Homo sapiens (Human).